The sequence spans 813 residues: Calpain-7 (813 aa).

At Met-1 the chain carries N-acetylmethionine. Thr-95 is subject to Phosphothreonine. Residues 232-540 form the Calpain catalytic domain; it reads RERFAYPMPF…YDVVYLSWNP (309 aa). Residues Cys-290, His-458, and Asn-478 contribute to the active site. The domain III stretch occupies residues 541–701; sequence ALFKESTCIH…INGKWSGQSA (161 aa). The interval 702–813 is domain N; the sequence is GGCGNFQETH…TVPIKTTQLQ (112 aa).

Belongs to the peptidase C2 family. In terms of tissue distribution, ubiquitous.

It localises to the nucleus. In terms of biological role, calcium-regulated non-lysosomal thiol-protease. This chain is Calpain-7 (Capn7), found in Mus musculus (Mouse).